The chain runs to 825 residues: Styryl dye vacuolar localization protein 3 (825 aa).

A coiled-coil region spans residues 366–423; that stretch reads QKNESALQTQITSLQGQISKLRQELLMQAKQHEMETNELKEKHQVALKAQAQAQAQAQ. A Phosphoserine modification is found at S471. Disordered stretches follow at residues 472–503 and 538–664; these read PVRS…NNGT and RFNN…NSMP. Residues 480 to 489 are compositionally biased toward low complexity; sequence VSSQPQMNSP. Positions 490–503 are enriched in polar residues; sequence LSSHSQTFGENNGT. T496 bears the Phosphothreonine mark. Position 551 is a phosphoserine (S551). A compositionally biased stretch (polar residues) spans 553–566; the sequence is PQLQQSANVRSNSR. The segment covering 604–616 has biased composition (low complexity); the sequence is PLQQPQQSVQVQP. 2 stretches are compositionally biased toward polar residues: residues 631–645 and 652–664; these read NSNM…SINM and PNNS…NSMP. Residue S662 is modified to Phosphoserine. A phosphothreonine mark is found at T739 and T756. Composition is skewed to low complexity over residues 750-759 and 774-788; these read TNTNNNTSST and TSVS…SSSS. Residues 750-825 are disordered; it reads TNTNNNTSST…LFKKKNKSKK (76 aa). Position 757 is a phosphoserine (S757). Over residues 789-798 the composition is skewed to polar residues; it reads QMANMASPST. The span at 809–825 shows a compositional bias: basic residues; that stretch reads GKKKRFGLFKKKNKSKK.

This sequence belongs to the PAM1/SVL3 family.

The protein localises to the cytoplasm. It localises to the bud. It is found in the bud neck. Its subcellular location is the cell cortex. In terms of biological role, may have a vacuolar function. The polypeptide is Styryl dye vacuolar localization protein 3 (SVL3) (Saccharomyces cerevisiae (strain ATCC 204508 / S288c) (Baker's yeast)).